The following is a 119-amino-acid chain: Large ribosomal subunit protein uL18 (119 aa).

The protein belongs to the universal ribosomal protein uL18 family. As to quaternary structure, part of the 50S ribosomal subunit; part of the 5S rRNA/L5/L18/L25 subcomplex. Contacts the 5S and 23S rRNAs.

In terms of biological role, this is one of the proteins that bind and probably mediate the attachment of the 5S RNA into the large ribosomal subunit, where it forms part of the central protuberance. The protein is Large ribosomal subunit protein uL18 of Clostridium botulinum (strain ATCC 19397 / Type A).